A 240-amino-acid polypeptide reads, in one-letter code: SURF1-like protein (240 aa).

Helical transmembrane passes span 7-23 (VFIT…WQLS) and 201-219 (YALT…YVIY).

Belongs to the SURF1 family.

The protein resides in the cell membrane. The protein is SURF1-like protein of Rickettsia conorii (strain ATCC VR-613 / Malish 7).